Consider the following 95-residue polypeptide: Large ribosomal subunit protein uL23 (95 aa).

This sequence belongs to the universal ribosomal protein uL23 family. Part of the 50S ribosomal subunit. Contacts protein L29, and trigger factor when it is bound to the ribosome.

Its function is as follows. One of the early assembly proteins it binds 23S rRNA. One of the proteins that surrounds the polypeptide exit tunnel on the outside of the ribosome. Forms the main docking site for trigger factor binding to the ribosome. This chain is Large ribosomal subunit protein uL23, found in Desulforamulus reducens (strain ATCC BAA-1160 / DSM 100696 / MI-1) (Desulfotomaculum reducens).